The primary structure comprises 607 residues: Karyogamy meiotic segregation protein 1 (607 aa).

Positions 83–135 (DDSFANQAEKPSMEQQNSKNSIKEDANEHSVNSAHSKSSSNASPESLNPSQMM) are disordered. Over residues 111 to 132 (HSVNSAHSKSSSNASPESLNPS) the composition is skewed to low complexity.

As to quaternary structure, interacts with mcp1 and sad1.

The protein localises to the cytoplasm. Its subcellular location is the cytoskeleton. The protein resides in the microtubule organizing center. It localises to the spindle pole body. In terms of biological role, has a role in karyogamy, recombination and segregation during meiosis. Although it has been shown to associate with the spindle pole body it is unlikely to be involved in its formation or maintenance. This Schizosaccharomyces pombe (strain 972 / ATCC 24843) (Fission yeast) protein is Karyogamy meiotic segregation protein 1 (kms1).